Here is a 325-residue protein sequence, read N- to C-terminus: Elongation factor P--(R)-beta-lysine ligase (325 aa).

Residue 76 to 78 (SPE) coordinates substrate. Residues 100–102 (RNE) and asparagine 109 contribute to the ATP site. Residue tyrosine 118 coordinates substrate. 244–245 (EL) lines the ATP pocket. Glutamate 251 is a substrate binding site. Residue glycine 300 participates in ATP binding.

This sequence belongs to the class-II aminoacyl-tRNA synthetase family. EpmA subfamily. Homodimer.

The enzyme catalyses D-beta-lysine + L-lysyl-[protein] + ATP = N(6)-((3R)-3,6-diaminohexanoyl)-L-lysyl-[protein] + AMP + diphosphate + H(+). Functionally, with EpmB is involved in the beta-lysylation step of the post-translational modification of translation elongation factor P (EF-P). Catalyzes the ATP-dependent activation of (R)-beta-lysine produced by EpmB, forming a lysyl-adenylate, from which the beta-lysyl moiety is then transferred to the epsilon-amino group of a conserved specific lysine residue in EF-P. This Yersinia pseudotuberculosis serotype O:1b (strain IP 31758) protein is Elongation factor P--(R)-beta-lysine ligase.